The chain runs to 237 residues: Orotidine 5'-phosphate decarboxylase (237 aa).

Substrate-binding positions include Asp-10, Lys-32, 59–68 (DLKLHDIPNT), Thr-118, Arg-180, Gln-189, Gly-209, and Arg-210. Lys-61 serves as the catalytic Proton donor.

This sequence belongs to the OMP decarboxylase family. Type 1 subfamily. As to quaternary structure, homodimer.

It catalyses the reaction orotidine 5'-phosphate + H(+) = UMP + CO2. Its pathway is pyrimidine metabolism; UMP biosynthesis via de novo pathway; UMP from orotate: step 2/2. Functionally, catalyzes the decarboxylation of orotidine 5'-monophosphate (OMP) to uridine 5'-monophosphate (UMP). The chain is Orotidine 5'-phosphate decarboxylase from Fusobacterium nucleatum subsp. nucleatum (strain ATCC 25586 / DSM 15643 / BCRC 10681 / CIP 101130 / JCM 8532 / KCTC 2640 / LMG 13131 / VPI 4355).